The following is a 101-amino-acid chain: Protein Tat (101 aa).

The interval 1-24 (MDPVDPNLEPWNHPGSQPKTPCNK) is interaction with human CREBBP. Residues 1 to 48 (MDPVDPNLEPWNHPGSQPKTPCNKCFCKVCCWHCQVCFLNKGLGISYG) are transactivation. Zn(2+) contacts are provided by C22, C25, and C27. Positions 22 to 37 (CNKCFCKVCCWHCQVC) are cysteine-rich. K28 carries the N6-acetyllysine; by host PCAF modification. Residues C30, H33, C34, and C37 each coordinate Zn(2+). The interval 38-48 (FLNKGLGISYG) is core. The segment covering 48 to 57 (GRKKRKHRRG) has biased composition (basic residues). Positions 48 to 101 (GRKKRKHRRGTPQSSKGHQDPVPKQPLPTTRGNPTGPKESKKEVASKAEADQCD) are disordered. Positions 49–57 (RKKRKHRRG) match the Nuclear localization signal, RNA-binding (TAR), and protein transduction motif. The segment at 49-86 (RKKRKHRRGTPQSSKGHQDPVPKQPLPTTRGNPTGPKE) is interaction with the host capping enzyme RNGTT. N6-acetyllysine; by host EP300 and GCN5L2 is present on residues K50 and K51. At R52 the chain carries Asymmetric dimethylarginine; by host PRMT6. K71 participates in a covalent cross-link: Glycyl lysine isopeptide (Lys-Gly) (interchain with G-Cter in ubiquitin). The segment covering 85–101 (KESKKEVASKAEADQCD) has biased composition (basic and acidic residues).

Belongs to the lentiviruses Tat family. In terms of assembly, interacts with host CCNT1. Associates with the P-TEFb complex composed at least of Tat, P-TEFb (CDK9 and CCNT1), TAR RNA, RNA Pol II. Recruits the HATs CREBBP, TAF1/TFIID, EP300, PCAF and GCN5L2. Interacts with host KAT5/Tip60; this interaction targets the latter to degradation. Interacts with the host deacetylase SIRT1. Interacts with host capping enzyme RNGTT; this interaction stimulates RNGTT. Binds to host KDR, and to the host integrins ITGAV/ITGB3 and ITGA5/ITGB1. Interacts with host KPNB1/importin beta-1 without previous binding to KPNA1/importin alpha-1. Interacts with EIF2AK2. Interacts with host nucleosome assembly protein NAP1L1; this interaction may be required for the transport of Tat within the nucleus, since the two proteins interact at the nuclear rim. Interacts with host C1QBP/SF2P32; this interaction involves lysine-acetylated Tat. Interacts with the host chemokine receptors CCR2, CCR3 and CXCR4. Interacts with host DPP4/CD26; this interaction may trigger an anti-proliferative effect. Interacts with host LDLR. Interacts with the host extracellular matrix metalloproteinase MMP1. Interacts with host PRMT6; this interaction mediates Tat's methylation. Interacts with, and is ubiquitinated by MDM2/Hdm2. Interacts with host PSMC3 and HTATIP2. Interacts with STAB1; this interaction may overcome SATB1-mediated repression of IL2 and IL2RA (interleukin) in T cells by binding to the same domain than HDAC1. Interacts (when acetylated) with human CDK13, thereby increasing HIV-1 mRNA splicing and promoting the production of the doubly spliced HIV-1 protein Nef. Interacts with host TBP; this interaction modulates the activity of transcriptional pre-initiation complex. Interacts with host RELA. Interacts with host PLSCR1; this interaction negatively regulates Tat transactivation activity by altering its subcellular distribution. In terms of processing, asymmetrical arginine methylation by host PRMT6 seems to diminish the transactivation capacity of Tat and affects the interaction with host CCNT1. Acetylation by EP300, CREBBP, GCN5L2/GCN5 and PCAF regulates the transactivation activity of Tat. EP300-mediated acetylation of Lys-50 promotes dissociation of Tat from the TAR RNA through the competitive binding to PCAF's bromodomain. In addition, the non-acetylated Tat's N-terminus can also interact with PCAF. PCAF-mediated acetylation of Lys-28 enhances Tat's binding to CCNT1. Lys-50 is deacetylated by SIRT1. Post-translationally, polyubiquitination by host MDM2 does not target Tat to degradation, but activates its transactivation function and fosters interaction with CCNT1 and TAR RNA. In terms of processing, phosphorylated by EIF2AK2 on serine and threonine residues adjacent to the basic region important for TAR RNA binding and function. Phosphorylation of Tat by EIF2AK2 is dependent on the prior activation of EIF2AK2 by dsRNA.

The protein resides in the host nucleus. Its subcellular location is the host nucleolus. It localises to the host cytoplasm. It is found in the secreted. Functionally, transcriptional activator that increases RNA Pol II processivity, thereby increasing the level of full-length viral transcripts. Recognizes a hairpin structure at the 5'-LTR of the nascent viral mRNAs referred to as the transactivation responsive RNA element (TAR) and recruits the cyclin T1-CDK9 complex (P-TEFb complex) that will in turn hyperphosphorylate the RNA polymerase II to allow efficient elongation. The CDK9 component of P-TEFb and other Tat-activated kinases hyperphosphorylate the C-terminus of RNA Pol II that becomes stabilized and much more processive. Other factors such as HTATSF1/Tat-SF1, SUPT5H/SPT5, and HTATIP2 are also important for Tat's function. Besides its effect on RNA Pol II processivity, Tat induces chromatin remodeling of proviral genes by recruiting the histone acetyltransferases (HATs) CREBBP, EP300 and PCAF to the chromatin. This also contributes to the increase in proviral transcription rate, especially when the provirus integrates in transcriptionally silent region of the host genome. To ensure maximal activation of the LTR, Tat mediates nuclear translocation of NF-kappa-B by interacting with host RELA. Through its interaction with host TBP, Tat may also modulate transcription initiation. Tat can reactivate a latently infected cell by penetrating in it and transactivating its LTR promoter. In the cytoplasm, Tat is thought to act as a translational activator of HIV-1 mRNAs. Its function is as follows. Extracellular circulating Tat can be endocytosed by surrounding uninfected cells via the binding to several surface receptors such as CD26, CXCR4, heparan sulfate proteoglycans (HSPG) or LDLR. Neurons are rarely infected, but they internalize Tat via their LDLR. Through its interaction with nuclear HATs, Tat is potentially able to control the acetylation-dependent cellular gene expression. Modulates the expression of many cellular genes involved in cell survival, proliferation or in coding for cytokines or cytokine receptors. Tat plays a role in T-cell and neurons apoptosis. Tat induced neurotoxicity and apoptosis probably contribute to neuroAIDS. Circulating Tat also acts as a chemokine-like and/or growth factor-like molecule that binds to specific receptors on the surface of the cells, affecting many cellular pathways. In the vascular system, Tat binds to ITGAV/ITGB3 and ITGA5/ITGB1 integrins dimers at the surface of endothelial cells and competes with bFGF for heparin-binding sites, leading to an excess of soluble bFGF. This chain is Protein Tat, found in Homo sapiens (Human).